We begin with the raw amino-acid sequence, 1575 residues long: Ras GTPase-activating-like protein IQGAP2 (1575 aa).

At S16 the chain carries Phosphoserine. The region spanning 41–156 (LCHLEEAKRW…YCIHALSLYL (116 aa)) is the Calponin-homology (CH) domain. T356 carries the post-translational modification Phosphothreonine. Positions 594–627 (ESSEGSWVTLNVQEKYNYYYNTDSKEGSWVPPEL) constitute a WW domain. A phosphoserine mark is found at S595 and S599. IQ domains are found at residues 690 to 719 (QTES…VFAG), 720 to 749 (NVDS…YFED), and 750 to 779 (HKNE…SENP). Residues T782, T881, T1002, and T1269 each carry the phosphothreonine modification. The 250-residue stretch at 933 to 1182 (YLLLKLFKTA…QEFRKYFQEA (250 aa)) folds into the Ras-GAP domain. Phosphoserine is present on residues S1279 and S1461.

Functionally, binds to activated CDC42 and RAC1 but does not seem to stimulate their GTPase activity. Associates with calmodulin. The sequence is that of Ras GTPase-activating-like protein IQGAP2 (Iqgap2) from Mus musculus (Mouse).